A 510-amino-acid chain; its full sequence is Glycerol kinase (510 aa).

Position 12 (Thr12) interacts with ADP. Positions 12, 13, and 14 each coordinate ATP. Thr12 serves as a coordination point for sn-glycerol 3-phosphate. Residue Arg16 coordinates ADP. Residues Arg82, Glu83, and Tyr134 each coordinate sn-glycerol 3-phosphate. Residues Arg82, Glu83, and Tyr134 each coordinate glycerol. His230 carries the phosphohistidine; by HPr modification. Asp244 provides a ligand contact to sn-glycerol 3-phosphate. Residues Asp244 and Gln245 each contribute to the glycerol site. ADP-binding residues include Thr266 and Gly309. ATP-binding residues include Thr266, Gly309, Gln313, and Gly410. Gly410 and Asn414 together coordinate ADP.

It belongs to the FGGY kinase family. As to quaternary structure, homotetramer and homodimer (in equilibrium). The phosphoenolpyruvate-dependent sugar phosphotransferase system (PTS), including enzyme I, and histidine-containing protein (HPr) are required for the phosphorylation, which leads to the activation of the enzyme.

It catalyses the reaction glycerol + ATP = sn-glycerol 3-phosphate + ADP + H(+). It participates in polyol metabolism; glycerol degradation via glycerol kinase pathway; sn-glycerol 3-phosphate from glycerol: step 1/1. Its activity is regulated as follows. Activated by phosphorylation and inhibited by fructose 1,6-bisphosphate (FBP). Functionally, key enzyme in the regulation of glycerol uptake and metabolism. Catalyzes the phosphorylation of glycerol to yield sn-glycerol 3-phosphate. The chain is Glycerol kinase from Bacillus cereus (strain ATCC 10987 / NRS 248).